Reading from the N-terminus, the 103-residue chain is Ig lambda chain C region (103 aa).

In terms of domain architecture, Ig-like spans 6 to 99 (PTITLFPPSK…NGTSITKTLK (94 aa)). Cysteine 28 and cysteine 85 are oxidised to a cystine.

This is Ig lambda chain C region from Gallus gallus (Chicken).